The sequence spans 380 residues: Erythronate-4-phosphate dehydrogenase (380 aa).

Substrate-binding residues include Ser45 and Thr66. Residues 126–127 (QV), Asp146, Thr174, 205–207 (ASR), and Asp231 each bind NAD(+). The active site involves Arg207. Glu236 is a catalytic residue. His253 serves as the catalytic Proton donor. An NAD(+)-binding site is contributed by Gly256. Tyr257 is a substrate binding site.

It belongs to the D-isomer specific 2-hydroxyacid dehydrogenase family. PdxB subfamily. Homodimer.

It is found in the cytoplasm. The catalysed reaction is 4-phospho-D-erythronate + NAD(+) = (R)-3-hydroxy-2-oxo-4-phosphooxybutanoate + NADH + H(+). The protein operates within cofactor biosynthesis; pyridoxine 5'-phosphate biosynthesis; pyridoxine 5'-phosphate from D-erythrose 4-phosphate: step 2/5. In terms of biological role, catalyzes the oxidation of erythronate-4-phosphate to 3-hydroxy-2-oxo-4-phosphonooxybutanoate. This Pseudomonas syringae pv. tomato (strain ATCC BAA-871 / DC3000) protein is Erythronate-4-phosphate dehydrogenase.